The primary structure comprises 426 residues: Elongation factor 1-alpha (426 aa).

In terms of domain architecture, tr-type G spans 5-221; it reads KPHMNLAVIG…DTFKEPDKPT (217 aa). The tract at residues 14–21 is G1; that stretch reads GHIDHGKS. Residue 14–21 participates in GTP binding; sequence GHIDHGKS. Ser21 lines the Mg(2+) pocket. Positions 70 to 74 are G2; it reads GITID. Residues 91–94 are G3; sequence DCPG. GTP contacts are provided by residues 91–95 and 146–149; these read DCPGH and NKMD. Positions 146–149 are G4; the sequence is NKMD. The segment at 185-187 is G5; the sequence is SSF.

This sequence belongs to the TRAFAC class translation factor GTPase superfamily. Classic translation factor GTPase family. EF-Tu/EF-1A subfamily.

The protein localises to the cytoplasm. The enzyme catalyses GTP + H2O = GDP + phosphate + H(+). Its function is as follows. GTP hydrolase that promotes the GTP-dependent binding of aminoacyl-tRNA to the A-site of ribosomes during protein biosynthesis. This chain is Elongation factor 1-alpha, found in Methanosphaerula palustris (strain ATCC BAA-1556 / DSM 19958 / E1-9c).